The chain runs to 320 residues: Aminoacyl tRNA synthase complex-interacting multifunctional protein 2 (320 aa).

Residue S36 is modified to Phosphoserine. An interaction with PRKN region spans residues 82–162 (TPDADLDVTN…HTHSSVKNVP (81 aa)). Residues 162–225 (PENLVKCFGE…FLFSLFGQKH (64 aa)) form an interaction with TP53 region. The region spanning 220-317 (LFGQKHNAVT…NLAPFSTALQ (98 aa)) is the GST C-terminal domain.

As to quaternary structure, part of the multisynthetase complex (MSC), a multisubunit complex that groups tRNA ligases for Arg (RARS1), Asp (DARS1), Gln (QARS1), Ile (IARS1), Leu (LARS1), Lys (KARS1), Met (MARS1) the bifunctional ligase for Glu and Pro (EPRS1) and the auxiliary subunits AIMP1/p43, AIMP2/p38 and EEF1E1/p18. Interacts (via N-terminus) with KARS1. Interacts with EPRS1. Forms a linear complex that contains MARS1, EEF1E1, EPRS1 and AIMP2 that is at the core of the multisubunit complex. Binds FUBP1 (via C-terminus). Interacts in both its unphosphorylated and phosphorylated forms with p53/TP53 (via N-terminus) in the nucleus following UV irradiation. Interacts (via N-terminus) with PRKN/parkin (via first RING-type domain). Interacts with TARS3. In terms of processing, phosphorylated on serine residues in response to UV irradiation. Post-translationally, ubiquitinated by PRKN, leading to its degradation by the proteasome.

The protein localises to the cytoplasm. It localises to the cytosol. It is found in the nucleus. Functionally, required for assembly and stability of the aminoacyl-tRNA synthase complex. Mediates ubiquitination and degradation of FUBP1, a transcriptional activator of MYC, leading to MYC down-regulation which is required for aveolar type II cell differentiation. Blocks MDM2-mediated ubiquitination and degradation of p53/TP53. Functions as a proapoptotic factor. The polypeptide is Aminoacyl tRNA synthase complex-interacting multifunctional protein 2 (Aimp2) (Mus musculus (Mouse)).